We begin with the raw amino-acid sequence, 257 residues long: Pyridoxine 5'-phosphate synthase (257 aa).

Asn16 contacts 3-amino-2-oxopropyl phosphate. 18–19 (DH) is a binding site for 1-deoxy-D-xylulose 5-phosphate. Arg27 provides a ligand contact to 3-amino-2-oxopropyl phosphate. Residue His52 is the Proton acceptor of the active site. Residues Arg54 and His59 each contribute to the 1-deoxy-D-xylulose 5-phosphate site. Glu79 functions as the Proton acceptor in the catalytic mechanism. Thr109 contacts 1-deoxy-D-xylulose 5-phosphate. The active-site Proton donor is the His200. Residues Gly201 and 222–223 (GH) each bind 3-amino-2-oxopropyl phosphate.

It belongs to the PNP synthase family. As to quaternary structure, homooctamer; tetramer of dimers.

Its subcellular location is the cytoplasm. The enzyme catalyses 3-amino-2-oxopropyl phosphate + 1-deoxy-D-xylulose 5-phosphate = pyridoxine 5'-phosphate + phosphate + 2 H2O + H(+). The protein operates within cofactor biosynthesis; pyridoxine 5'-phosphate biosynthesis; pyridoxine 5'-phosphate from D-erythrose 4-phosphate: step 5/5. Functionally, catalyzes the complicated ring closure reaction between the two acyclic compounds 1-deoxy-D-xylulose-5-phosphate (DXP) and 3-amino-2-oxopropyl phosphate (1-amino-acetone-3-phosphate or AAP) to form pyridoxine 5'-phosphate (PNP) and inorganic phosphate. In Burkholderia pseudomallei (strain K96243), this protein is Pyridoxine 5'-phosphate synthase.